Here is a 647-residue protein sequence, read N- to C-terminus: Threonine--tRNA ligase (647 aa).

The TGS domain occupies 1-61; it reads MINITFPDGA…TEDGSIEIVT (61 aa). Residues 242-540 are catalytic; the sequence is DHRKLGKELD…LIENYKGAFP (299 aa). Residues cysteine 336, histidine 387, and histidine 517 each coordinate Zn(2+).

The protein belongs to the class-II aminoacyl-tRNA synthetase family. In terms of assembly, homodimer. Requires Zn(2+) as cofactor.

The protein resides in the cytoplasm. The enzyme catalyses tRNA(Thr) + L-threonine + ATP = L-threonyl-tRNA(Thr) + AMP + diphosphate + H(+). Functionally, catalyzes the attachment of threonine to tRNA(Thr) in a two-step reaction: L-threonine is first activated by ATP to form Thr-AMP and then transferred to the acceptor end of tRNA(Thr). Also edits incorrectly charged L-seryl-tRNA(Thr). This is Threonine--tRNA ligase from Streptococcus pneumoniae (strain ATCC 700669 / Spain 23F-1).